A 336-amino-acid chain; its full sequence is Dihydroorotate dehydrogenase (quinone) (336 aa).

FMN-binding positions include 62–66 (AGLDK) and Thr86. Lys66 is a binding site for substrate. Substrate is bound at residue 111-115 (NRMGF). Positions 139 and 172 each coordinate FMN. Substrate is bound at residue Asn172. Ser175 functions as the Nucleophile in the catalytic mechanism. Asn177 contributes to the substrate binding site. The FMN site is built by Lys217 and Thr245. Residue 246–247 (NT) coordinates substrate. FMN contacts are provided by residues Gly268, Gly297, and 318-319 (YS).

It belongs to the dihydroorotate dehydrogenase family. Type 2 subfamily. Monomer. FMN serves as cofactor.

The protein resides in the cell membrane. It catalyses the reaction (S)-dihydroorotate + a quinone = orotate + a quinol. It participates in pyrimidine metabolism; UMP biosynthesis via de novo pathway; orotate from (S)-dihydroorotate (quinone route): step 1/1. Its function is as follows. Catalyzes the conversion of dihydroorotate to orotate with quinone as electron acceptor. The chain is Dihydroorotate dehydrogenase (quinone) from Baumannia cicadellinicola subsp. Homalodisca coagulata.